The primary structure comprises 77 residues: Putative defensin-like protein 120 (77 aa).

Positions 1 to 26 (MTQKATILAIFMVVLVLGLETKETQG) are cleaved as a signal peptide. Intrachain disulfides connect Cys-30–Cys-75, Cys-39–Cys-60, Cys-44–Cys-69, and Cys-48–Cys-71.

This sequence belongs to the DEFL family.

It is found in the secreted. This chain is Putative defensin-like protein 120 (LCR56), found in Arabidopsis thaliana (Mouse-ear cress).